The chain runs to 312 residues: Ribosomal RNA small subunit methyltransferase H (312 aa).

S-adenosyl-L-methionine contacts are provided by residues 33 to 35, Asp53, Phe80, Asp102, and Gln109; that span reads GGH.

It belongs to the methyltransferase superfamily. RsmH family.

It localises to the cytoplasm. The catalysed reaction is cytidine(1402) in 16S rRNA + S-adenosyl-L-methionine = N(4)-methylcytidine(1402) in 16S rRNA + S-adenosyl-L-homocysteine + H(+). Its function is as follows. Specifically methylates the N4 position of cytidine in position 1402 (C1402) of 16S rRNA. The protein is Ribosomal RNA small subunit methyltransferase H of Heliobacterium mobile (Heliobacillus mobilis).